A 93-amino-acid chain; its full sequence is Small ribosomal subunit protein uS15 (93 aa).

This sequence belongs to the universal ribosomal protein uS15 family. Part of the 30S ribosomal subunit. Forms a bridge to the 50S subunit in the 70S ribosome, contacting the 23S rRNA.

Its function is as follows. One of the primary rRNA binding proteins, it binds directly to 16S rRNA where it helps nucleate assembly of the platform of the 30S subunit by binding and bridging several RNA helices of the 16S rRNA. Functionally, forms an intersubunit bridge (bridge B4) with the 23S rRNA of the 50S subunit in the ribosome. The chain is Small ribosomal subunit protein uS15 from Ehrlichia canis (strain Jake).